We begin with the raw amino-acid sequence, 185 residues long: Peptide methionine sulfoxide reductase MsrA (185 aa).

The active site involves cysteine 12.

The protein belongs to the MsrA Met sulfoxide reductase family.

The catalysed reaction is L-methionyl-[protein] + [thioredoxin]-disulfide + H2O = L-methionyl-(S)-S-oxide-[protein] + [thioredoxin]-dithiol. The enzyme catalyses [thioredoxin]-disulfide + L-methionine + H2O = L-methionine (S)-S-oxide + [thioredoxin]-dithiol. Has an important function as a repair enzyme for proteins that have been inactivated by oxidation. Catalyzes the reversible oxidation-reduction of methionine sulfoxide in proteins to methionine. This is Peptide methionine sulfoxide reductase MsrA from Granulibacter bethesdensis (strain ATCC BAA-1260 / CGDNIH1).